The primary structure comprises 200 residues: Transcription elongation factor A protein-like 3 (200 aa).

The segment at 1–200 (MEKPYNKNEG…QRGLHDIPYL (200 aa)) is disordered. Residues 20–36 (DEVEPDDEGKSDEEEKP) are compositionally biased toward acidic residues. At serine 30 the chain carries Phosphoserine. A compositionally biased stretch (basic and acidic residues) spans 37-50 (DVEGKTECEGKRED). Residues 51–64 (EGEPGDEGQLEDEG) are compositionally biased toward acidic residues. Serine 65 is subject to Phosphoserine. 3 stretches are compositionally biased toward basic and acidic residues: residues 65–80 (SQEKQGRSEGEGKPQG), 96–107 (AAEKRPAEDYVP), and 115–154 (DRGTDDSPKDSQEDLQERHLSSEEMMRECGDVSRAQEELR).

It belongs to the TFS-II family. TFA subfamily.

Its subcellular location is the nucleus. In terms of biological role, may be involved in transcriptional regulation. This chain is Transcription elongation factor A protein-like 3 (TCEAL3), found in Homo sapiens (Human).